An 87-amino-acid chain; its full sequence is MNKMQGKKKKKEEEEEEERIIPPELWKLIIEQYKRQLAKTDVMKVSETVKLHEEKIKEKVPTDHIIHAQKPNAWVEETKKSGGCLLV.

Cysteine 84 is subject to Cysteine methyl ester. Cysteine 84 is lipidated: S-geranylgeranyl cysteine. A propeptide spans leucine 85 to valine 87 (removed in mature form).

The protein belongs to the G protein gamma family. As to quaternary structure, g proteins are composed of 3 units, alpha, beta and gamma. In terms of processing, the N-terminus is blocked.

The protein resides in the cell membrane. In terms of biological role, guanine nucleotide-binding proteins (G proteins) are involved as a modulator or transducer in various transmembrane signaling systems. This major G-protein of the squid photoreceptor is involved in visual transduction. The beta and gamma chains are required for the GTPase activity, for replacement of GDP by GTP, and for G protein-effector interaction. The polypeptide is Guanine nucleotide-binding protein subunit gamma (Loligo forbesii (Veined squid)).